Here is a 566-residue protein sequence, read N- to C-terminus: DNA ligase B (566 aa).

Lys125 functions as the N6-AMP-lysine intermediate in the catalytic mechanism.

Belongs to the NAD-dependent DNA ligase family. LigB subfamily.

It carries out the reaction NAD(+) + (deoxyribonucleotide)n-3'-hydroxyl + 5'-phospho-(deoxyribonucleotide)m = (deoxyribonucleotide)n+m + AMP + beta-nicotinamide D-nucleotide.. Catalyzes the formation of phosphodiester linkages between 5'-phosphoryl and 3'-hydroxyl groups in double-stranded DNA using NAD as a coenzyme and as the energy source for the reaction. In Pseudomonas putida (strain ATCC 700007 / DSM 6899 / JCM 31910 / BCRC 17059 / LMG 24140 / F1), this protein is DNA ligase B.